Consider the following 262-residue polypeptide: F-actin-capping protein subunit alpha (262 aa).

The protein belongs to the F-actin-capping protein alpha subunit family. In terms of assembly, heterodimer of an alpha and a beta subunit.

In terms of biological role, F-actin-capping proteins bind in a Ca(2+)-independent manner to the fast growing ends of actin filaments (barbed end) thereby blocking the exchange of subunits at these ends. Unlike other capping proteins (such as gelsolin and severin), these proteins do not sever actin filaments. This chain is F-actin-capping protein subunit alpha (CAP1), found in Kluyveromyces lactis (strain ATCC 8585 / CBS 2359 / DSM 70799 / NBRC 1267 / NRRL Y-1140 / WM37) (Yeast).